The sequence spans 429 residues: G2/mitotic-specific cyclin-B1 (429 aa).

Positions 1-14 (MALRVTRNTKLNTE) are enriched in polar residues. 2 disordered regions span residues 1–21 (MALR…KVSM) and 71–128 (TGKV…PMET). Lysine 73 is modified (N6-acetyllysine). Residues 92 to 106 (PEVELAEPEPEPEPV) are compositionally biased toward acidic residues. Serine 122 carries the phosphoserine; by CDK1 modification. Position 124 is a phosphoserine (serine 124). A Phosphoserine; by PLK1 modification is found at serine 129. A Phosphoserine modification is found at serine 143. Interaction with CDK2 stretches follow at residues 165–173 (EYVKDIYAY) and 254–257 (YEEM). Phosphothreonine is present on threonine 317.

Belongs to the cyclin family. Cyclin AB subfamily. As to quaternary structure, interacts with the CDC2 protein kinase to form a serine/threonine kinase holoenzyme complex also known as maturation promoting factor (MPF). The cyclin subunit imparts substrate specificity to the complex. Binds HEI10. Interacts with catalytically active RALBP1 and CDC2 during mitosis to form an endocytotic complex during interphase. Interacts with CCNF; interaction is required for nuclear localization. Interacts with CDK5RAP3. Interacts with RFPL4A and UBE2A. Interacts with INCA1. Ubiquitinated by the SCF(NIPA) complex during interphase, leading to its destruction. Not ubiquitinated during G2/M phases. Post-translationally, phosphorylated by PLK1 at Ser-129 on centrosomes during prophase: phosphorylation by PLK1 does not cause nuclear import. Phosphorylation at Ser-143 was also reported to be mediated by PLK1 but Ser-129 seems to be the primary phosphorylation site.

The protein resides in the cytoplasm. Its subcellular location is the nucleus. The protein localises to the cytoskeleton. It is found in the microtubule organizing center. It localises to the centrosome. Its function is as follows. Essential for the control of the cell cycle at the G2/M (mitosis) transition. The polypeptide is G2/mitotic-specific cyclin-B1 (CCNB1) (Cricetulus griseus (Chinese hamster)).